The sequence spans 154 residues: Myoglobin (154 aa).

One can recognise a Globin domain in the interval 2–148; that stretch reads GLSDGEWQIV…FRNDIAAKYK (147 aa). Residue serine 4 is modified to Phosphoserine. Histidine 65 contacts nitrite. An O2-binding site is contributed by histidine 65. Position 68 is a phosphothreonine (threonine 68). Histidine 94 is a binding site for heme b.

It belongs to the globin family. Monomeric.

Its subcellular location is the cytoplasm. The protein resides in the sarcoplasm. It catalyses the reaction Fe(III)-heme b-[protein] + nitric oxide + H2O = Fe(II)-heme b-[protein] + nitrite + 2 H(+). The catalysed reaction is H2O2 + AH2 = A + 2 H2O. Its function is as follows. Monomeric heme protein which primary function is to store oxygen and facilitate its diffusion within muscle tissues. Reversibly binds oxygen through a pentacoordinated heme iron and enables its timely and efficient release as needed during periods of heightened demand. Depending on the oxidative conditions of tissues and cells, and in addition to its ability to bind oxygen, it also has a nitrite reductase activity whereby it regulates the production of bioactive nitric oxide. Under stress conditions, like hypoxia and anoxia, it also protects cells against reactive oxygen species thanks to its pseudoperoxidase activity. This is Myoglobin (MB) from Canis lupus familiaris (Dog).